Reading from the N-terminus, the 229-residue chain is Apoptosis regulator Bcl-2 (229 aa).

The short motif at 10 to 30 (DNREIVMKYIHYKLSQRGYEW) is the BH4 element. Positions 30-82 (WDAGDAGAAPPGAAPAPGILSSQPGRTPAPSRTSPPPPPAAAAGPAPSPVPPV) are disordered. The span at 33–61 (GDAGAAPPGAAPAPGILSSQPGRTPAPSR) shows a compositional bias: low complexity. Threonine 62 is modified (phosphothreonine; by MAPK8). Residues 62–81 (TSPPPPPAAAAGPAPSPVPP) show a composition bias toward pro residues. At serine 63 the chain carries Phosphoserine; by MAPK8 and PKC. Residue serine 77 is modified to Phosphoserine; by MAPK8. The BH3 signature appears at 83-97 (VHLTLRQAGDDFSRR). A BH1 motif is present at residues 126 to 145 (ELFRDGVNWGRIVAFFEFGG). Residues 177–192 (TWIQDNGGWDAFVELY) carry the BH2 motif. A helical transmembrane segment spans residues 202–223 (FSWLSLKALLSLALVGACITLG).

Belongs to the Bcl-2 family. As to quaternary structure, forms homodimers, and heterodimers with BAX, BAD, BAK and Bcl-X(L). Heterodimerization with BAX requires intact BH1 and BH2 motifs, and is necessary for anti-apoptotic activity. Component of the complex, at least composed of LRPPRC, BECN1 and BCL2; the interactions prevent BECN1 from forming an autophagy-inducing complex with PIK3C3. Interacts with EI24. Also interacts with APAF1, BBC3, BCL2L1, BNIPL, MRPL41 and TP53BP2. Binding to FKBP8 seems to target BCL2 to the mitochondria and probably interferes with the binding of BCL2 to its targets. Interacts with BAG1 in an ATP-dependent manner. Interacts with RAF1 (the 'Ser-338' and 'Ser-339' phosphorylated form). Interacts (via the BH4 domain) with EGLN3; the interaction prevents the formation of the BAX-BCL2 complex and inhibits the anti-apoptotic activity of BCL2. Interacts with G0S2; this interaction also prevents the formation of the anti-apoptotic BAX-BCL2 complex. Interacts with RTL10/BOP. Interacts with the SCF(FBXO10) complex. Interacts (via the loop between motifs BH4 and BH3) with NLRP1 (via LRR repeats), but not with NLRP2, NLRP3, NLRP4, PYCARD, nor MEFV. Interacts with GIMAP3/IAN4, GIMAP4/IAN1 and GIMAP5/IAN5. Interacts with BCAP31. Interacts with IRF3; the interaction is inhibited by Sendai virus infection. Interacts with BECN1; thereby inhibiting autophagy in non-starvation conditions. Interacts with AMBRA1; thereby inhibiting autophagy. In terms of processing, phosphorylation/dephosphorylation on Ser-63 regulates anti-apoptotic activity. Growth factor-stimulated phosphorylation on Ser-63 by PKC is required for the anti-apoptosis activity and occurs during the G2/M phase of the cell cycle. In the absence of growth factors, BCL2 appears to be phosphorylated by other protein kinases such as ERKs and stress-activated kinases. Phosphorylated by MAPK8/JNK1 at Thr-62, Ser-63 and Ser-77, which stimulates starvation-induced autophagy. Dephosphorylated by protein phosphatase 2A (PP2A). Post-translationally, proteolytically cleaved by caspases during apoptosis. The cleaved protein, lacking the BH4 motif, has pro-apoptotic activity, causes the release of cytochrome c into the cytosol promoting further caspase activity. Monoubiquitinated by PRKN, leading to an increase in its stability. Ubiquitinated by SCF(FBXO10), leading to its degradation by the proteasome.

The protein resides in the mitochondrion outer membrane. It is found in the nucleus membrane. The protein localises to the endoplasmic reticulum membrane. Its subcellular location is the cytoplasm. Functionally, suppresses apoptosis in a variety of cell systems including factor-dependent lymphohematopoietic and neural cells. Regulates cell death by controlling the mitochondrial membrane permeability. Appears to function in a feedback loop system with caspases. Inhibits caspase activity either by preventing the release of cytochrome c from the mitochondria and/or by binding to the apoptosis-activating factor (APAF-1). Also acts as an inhibitor of autophagy: interacts with BECN1 and AMBRA1 during non-starvation conditions and inhibits their autophagy function. May attenuate inflammation by impairing NLRP1-inflammasome activation, hence CASP1 activation and IL1B release. The protein is Apoptosis regulator Bcl-2 (BCL2) of Bos taurus (Bovine).